The primary structure comprises 393 residues: Cytochrome b (393 aa).

4 helical membrane passes run 38–58 (FGSLAGICLVIQIVTGVFLAM), 82–104 (WLLRYMHANGASMFFIVVYLHIF), 119–139 (VWCLGVVIFLLMIVTAFIGYV), and 185–205 (FFSLHYLLPFILVGASLLHLA). Residues His-88 and His-102 each coordinate heme b. Heme b-binding residues include His-189 and His-203. His-208 is an a ubiquinone binding site. 4 helical membrane-spanning segments follow: residues 231-251 (FYVKDLVGWVAFAIFFSIWIF), 295-315 (VGGVAAIALVFICLLALPFFK), 327-347 (IYQGIFWLLLADCLLLGWIGC), and 354-373 (FVTIGQISSLVFFLFFAITP).

It belongs to the cytochrome b family. The main subunits of complex b-c1 are: cytochrome b, cytochrome c1 and the Rieske protein. Heme b serves as cofactor. First mitochondrial-encoded protein to be shown to have its N-terminal methionine cleaved off.

It is found in the mitochondrion inner membrane. Its function is as follows. Component of the ubiquinol-cytochrome c reductase complex (complex III or cytochrome b-c1 complex) that is part of the mitochondrial respiratory chain. The b-c1 complex mediates electron transfer from ubiquinol to cytochrome c. Contributes to the generation of a proton gradient across the mitochondrial membrane that is then used for ATP synthesis. This chain is Cytochrome b (MT-CYB), found in Solanum tuberosum (Potato).